A 191-amino-acid chain; its full sequence is Thymidylate kinase (191 aa).

7 to 14 (GVDGVGKS) contributes to the ATP binding site.

This sequence belongs to the thymidylate kinase family.

It catalyses the reaction dTMP + ATP = dTDP + ADP. Functionally, phosphorylation of dTMP to form dTDP in both de novo and salvage pathways of dTTP synthesis. This Helicobacter pylori (strain HPAG1) protein is Thymidylate kinase.